A 694-amino-acid chain; its full sequence is MLRSRQATNALRAVGQTRPLRSQTAVAFTQSLNKVPSNRRSEATVATASSTASGAFNSQVRPTPSPTFNQYDSKVQPLTGMSRNVTDESFIGKTGGEIFHDMMLRQGVKHIFGYPGGAILPVFDAIYNSTHFDFILPRHEQGAGHMAEGYARASGKPGVVLVTSGPGATNIVTPMQDALLDGTPMVVFCGQVPTTSIGSDAFQEADIVGISRPCTKWNVMVKNIAELPRRINEAFQIATTGRPGPVLVDLPKDVTAGILRRAIPTDAAIPSLPSASIQDAMDLNHKQLEASIARVAKLVNMAKQPVIYAGQGVIQSESGPELLKKLSDLASIPVTTTLQGLGGFDELDYKSLHMLGMHGSAYANMAMQEADLIIALGGRFDDRVTLNVSKFAPGARAAAAENRGGIVQFEIMPKNINKVVEATEAIVGDVGANLRLLLPHVESRSTDDRSAWYTKIDAWKKKWPLSDYQKTERHGLIKPQTLIEELSNLCADRKEKTYITTGVGQHQMWTAQHFRWRHPRTMITSGGLGTMGYGLPAAIGAKVAQPDALVVDIDGDASFNMTLTELSTAAQFNIGVKVIVLNNEEQGMVTQWQNLFYEDRYAHTHQANPDFIKIADAMGIQGQRVADPTKIKESLQWLIDTDGPALLEVITDKKVPVLPMVPGGCGLHEFIVFNPEDEKTRRGLMRERTCGLHG.

A mitochondrion-targeting transit peptide spans 1–42 (MLRSRQATNALRAVGQTRPLRSQTAVAFTQSLNKVPSNRRSE). The segment covering 45–58 (VATASSTASGAFNS) has biased composition (low complexity). Positions 45–69 (VATASSTASGAFNSQVRPTPSPTFN) are disordered. Residues 59-69 (QVRPTPSPTFN) show a composition bias toward polar residues. Position 140 (glutamate 140) interacts with thiamine diphosphate. FAD is bound by residues arginine 242, 358-379 (HGSAYANMAMQEADLIIALGGR), and 410-429 (EIMPKNINKVVEATEAIVGD). Residues 505–585 (QHQMWTAQHF…VKVIVLNNEE (81 aa)) are thiamine pyrophosphate binding. Residues aspartate 556, asparagine 583, and glutamate 585 each coordinate Mg(2+).

This sequence belongs to the TPP enzyme family. As to quaternary structure, homodimer. The cofactor is Mg(2+). Thiamine diphosphate is required as a cofactor.

It localises to the mitochondrion. The catalysed reaction is 2 pyruvate + H(+) = (2S)-2-acetolactate + CO2. It catalyses the reaction 2-oxobutanoate + pyruvate + H(+) = (S)-2-ethyl-2-hydroxy-3-oxobutanoate + CO2. Its pathway is amino-acid biosynthesis; L-isoleucine biosynthesis; L-isoleucine from 2-oxobutanoate: step 1/4. It participates in amino-acid biosynthesis; L-valine biosynthesis; L-valine from pyruvate: step 1/4. Acetolactate synthase catalytic subunit, mitochondrial; part of the gene cluster that mediates the biosynthesis of chlorflavonin, a fungal flavonoid with acetolactate synthase inhibitory activity. Is not direcly involved in chlorflavonin biosynthesis but acts as a self-resistant protein that effectively confers chlorflavonin resistance to the native host. As a catalytic subunit of mitochondrial acetolactate synthase, catalyzes the first of a series of common steps in the biosynthesis of the branched-chain amino acids. Catalyzes the irreversible decarboxylation of pyruvate to a bound hydroxyethyl group that then condenses with either a second pyruvate molecule to form 2-acetolactate (AL) or with 2-ketobutyrate to form 2-aceto-2-hydroxybutyrate (AHB). The first product is the precursor for valine and leucine biosynthesis, while the second leads to isoleucine. The protein is Acetolactate synthase catalytic subunit, mitochondrial of Aspergillus candidus.